A 274-amino-acid polypeptide reads, in one-letter code: Dermonecrotic toxin SaSicTox-betaIIB1 (274 aa).

Histidine 5 is a catalytic residue. The Mg(2+) site is built by glutamate 25 and aspartate 27. Histidine 41 acts as the Nucleophile in catalysis. 2 cysteine pairs are disulfide-bonded: cysteine 45-cysteine 51 and cysteine 47-cysteine 190. Aspartate 85 contributes to the Mg(2+) binding site.

It belongs to the arthropod phospholipase D family. Class II subfamily. The cofactor is Mg(2+). In terms of tissue distribution, expressed by the venom gland.

Its subcellular location is the secreted. The catalysed reaction is an N-(acyl)-sphingosylphosphocholine = an N-(acyl)-sphingosyl-1,3-cyclic phosphate + choline. It carries out the reaction an N-(acyl)-sphingosylphosphoethanolamine = an N-(acyl)-sphingosyl-1,3-cyclic phosphate + ethanolamine. The enzyme catalyses a 1-acyl-sn-glycero-3-phosphocholine = a 1-acyl-sn-glycero-2,3-cyclic phosphate + choline. It catalyses the reaction a 1-acyl-sn-glycero-3-phosphoethanolamine = a 1-acyl-sn-glycero-2,3-cyclic phosphate + ethanolamine. Its function is as follows. Dermonecrotic toxins cleave the phosphodiester linkage between the phosphate and headgroup of certain phospholipids (sphingolipid and lysolipid substrates), forming an alcohol (often choline) and a cyclic phosphate. This toxin acts on sphingomyelin (SM). It may also act on ceramide phosphoethanolamine (CPE), lysophosphatidylcholine (LPC) and lysophosphatidylethanolamine (LPE), but not on lysophosphatidylserine (LPS), and lysophosphatidylglycerol (LPG). It acts by transphosphatidylation, releasing exclusively cyclic phosphate products as second products. Induces dermonecrosis, hemolysis, increased vascular permeability, edema, inflammatory response, and platelet aggregation. This Sicarius albospinosus (Six-eyed crab spider) protein is Dermonecrotic toxin SaSicTox-betaIIB1.